A 412-amino-acid polypeptide reads, in one-letter code: Type II methyltransferase M.Sau3AI (412 aa).

An SAM-dependent MTase C5-type domain is found at 4–402; it reads IKVVELFAGV…NQIEKIDSIT (399 aa). Cys85 is a catalytic residue.

This sequence belongs to the class I-like SAM-binding methyltransferase superfamily. C5-methyltransferase family.

The catalysed reaction is a 2'-deoxycytidine in DNA + S-adenosyl-L-methionine = a 5-methyl-2'-deoxycytidine in DNA + S-adenosyl-L-homocysteine + H(+). In terms of biological role, a methylase that recognizes the double-stranded sequence 5'-GATC-3', methylates C-4 on both strands and protects the DNA from cleavage by the Sau3AI endonuclease. This Staphylococcus aureus protein is Type II methyltransferase M.Sau3AI (sau3AIM).